The following is a 447-amino-acid chain: Tryptophan synthase beta chain (447 aa).

Lys-92 is modified (N6-(pyridoxal phosphate)lysine). Residues 408–447 (GLAVKGGEQPKEFSDGPPLGKLAPSGGSAVREATSVGARK) are disordered.

It belongs to the TrpB family. Tetramer of two alpha and two beta chains. Pyridoxal 5'-phosphate is required as a cofactor.

It carries out the reaction (1S,2R)-1-C-(indol-3-yl)glycerol 3-phosphate + L-serine = D-glyceraldehyde 3-phosphate + L-tryptophan + H2O. It functions in the pathway amino-acid biosynthesis; L-tryptophan biosynthesis; L-tryptophan from chorismate: step 5/5. Functionally, the beta subunit is responsible for the synthesis of L-tryptophan from indole and L-serine. The sequence is that of Tryptophan synthase beta chain from Polaromonas sp. (strain JS666 / ATCC BAA-500).